We begin with the raw amino-acid sequence, 205 residues long: uncharacterized protein (205 aa).

The interval 72–114 is disordered; the sequence is ARVSPYGYESDSENEEYTRISSATSSNVLTDSPTTTQDDPTGR. Positions 90 to 100 are enriched in polar residues; the sequence is RISSATSSNVL. Positions 101-110 are enriched in low complexity; it reads TDSPTTTQDD.

This is an uncharacterized protein from Equus caballus (Horse).